The primary structure comprises 207 residues: Suppressor of IKBKE 1 (207 aa).

2 coiled-coil regions span residues histidine 70–glutamate 102 and cysteine 164–glutamine 192.

This sequence belongs to the SIKE family. As to quaternary structure, interacts with IKBKE and TBK1 via its coiled coil region. Interaction with TBK1 is disrupted upon viral infection or TLR3 stimulation. Interacts with CDC42BPB. Interacts with SIKE1 which mediates association with the STRIPAK core complex composed of PP2A catalytic and scaffolding subunits, the striatins (PP2A regulatory subunits), the striatin-associated proteins MOB4, STRIP1 and STRIP2, PDCD10 and members of the STE20 kinases, such as STK24 and STK26.

Its subcellular location is the cytoplasm. Functionally, physiological suppressor of IKK-epsilon and TBK1 that plays an inhibitory role in virus- and TLR3-triggered IRF3. Inhibits TLR3-mediated activation of interferon-stimulated response elements (ISRE) and the IFN-beta promoter. May act by disrupting the interactions of IKBKE or TBK1 with TICAM1/TRIF, IRF3 and RIGI. Does not inhibit NF-kappa-B activation pathways. Associates with the striatin-interacting phosphatase and kinase (STRIPAK) core complex, forming the extended (SIKE1:SLMAP)STRIPAK complex. The (SIKE1:SLMAP)STRIPAK complex dephosphorylates STK3 leading to the inhibition of Hippo signaling and the control of cell growth. In Mus musculus (Mouse), this protein is Suppressor of IKBKE 1 (Sike1).